The chain runs to 166 residues: MDVSQLTDAELRDSLKSHGVSVGPIVATTRKLYEKKLIKLSDGSINNQSNLNDSQFNEDSLIISSSPKKSPPQRVFQNVSAATAAATTSPESDSDDCEESMRYLTEEEMAADRASARQAQSNKGGFLGSTITFTILFVFIAVFAYFLIENAEQLKLVAETNPEDTI.

Residues 1 to 44 form the LEM domain; sequence MDVSQLTDAELRDSLKSHGVSVGPIVATTRKLYEKKLIKLSDGS. Over 1-127 the chain is Nuclear; sequence MDVSQLTDAE…QAQSNKGGFL (127 aa). A disordered region spans residues 62–99; the sequence is IISSSPKKSPPQRVFQNVSAATAAATTSPESDSDDCEE. The chain crosses the membrane as a helical span at residues 128–148; that stretch reads GSTITFTILFVFIAVFAYFLI. Over 149 to 166 the chain is Perinuclear space; that stretch reads ENAEQLKLVAETNPEDTI.

As to quaternary structure, interacts with lmn-1 and baf-1. As to expression, ubiquitous. Expressed in all cells, except in cells undergoing spermatogenesis. High expression in hypodermis, neurons, pharyngeal muscle, body wall muscle and gonadal sheath.

It localises to the nucleus inner membrane. It is found in the nucleus envelope. Functionally, nuclear lamina-associated inner nuclear membrane protein that is involved in cell division, nuclear structure organization, maintenance of nuclear envelope integrity and nuclear envelope reformation after mitosis. Involved in chromosome segregation and cell division, probably via its interaction with the nuclear intermediate filament protein lmn-1, the main component of nuclear lamina. Required to organize the distribution of lmn-1, nuclear pore complexes (NPCs) and chromatin in mitotically active cells. Together with lem-2, plays a role in baf-1 enrichment at the nuclear envelope in anaphase. Together with lem-2, involved in muscle cell attachment to hypodermal cells, as well as muscle cell location and sarcomere organization. May play a role in radiation-induced DNA damage repair response. May repress binding of transcription factor pha-4 with target sequences in pharyngeal cells. The protein is Emerin homolog 1 (emr-1) of Caenorhabditis elegans.